Reading from the N-terminus, the 320-residue chain is Solute carrier family 25 member 33 (320 aa).

Solcar repeat units follow at residues E9–Q118, N126–C213, and S231–L315. Helical transmembrane passes span L12 to L32, V49 to V65, G121 to V141, L190 to L210, F233 to P253, and Q298 to E318.

The protein belongs to the mitochondrial carrier (TC 2.A.29) family.

The protein resides in the mitochondrion inner membrane. It catalyses the reaction UTP(in) + UDP(out) = UTP(out) + UDP(in). The enzyme catalyses dUTP(out) + UTP(in) = dUTP(in) + UTP(out). The catalysed reaction is 5-methyl-UTP(out) + UTP(in) = 5-methyl-UTP(in) + UTP(out). It carries out the reaction 5-methyl-UDP(out) + UTP(in) = 5-methyl-UDP(in) + UTP(out). It catalyses the reaction UTP(in) + CTP(out) = UTP(out) + CTP(in). The enzyme catalyses CDP(out) + UTP(in) = CDP(in) + UTP(out). The catalysed reaction is dCTP(out) + UTP(in) = dCTP(in) + UTP(out). It carries out the reaction dCDP(out) + UTP(in) = dCDP(in) + UTP(out). It catalyses the reaction UTP(in) + GTP(out) = UTP(out) + GTP(in). The enzyme catalyses UTP(in) + GDP(out) = UTP(out) + GDP(in). The catalysed reaction is dGTP(out) + UTP(in) = dGTP(in) + UTP(out). It carries out the reaction dGDP(out) + UTP(in) = dGDP(in) + UTP(out). It catalyses the reaction ITP(out) + UTP(in) = ITP(in) + UTP(out). Functionally, mitochondrial transporter that imports/exports pyrimidine nucleotides into and from mitochondria. Selectively transports uridine, thymidine, guanosine, cytosine and inosine (deoxy)nucleoside di- and triphosphates by an antiport mechanism. May import (deoxy)nucleoside triphosphates in exchange for intramitochondrial (deoxy)nucleoside diphosphates, thus providing precursors necessary for de novo synthesis of mitochondrial DNA and RNA while exporting products of their catabolism. Participates in mitochondrial genome maintenance, regulation of mitochondrial membrane potential and mitochondrial respiration. Upon INS or IGF1 stimulation regulates cell growth and proliferation by controlling mitochondrial DNA replication and transcription, the ratio of mitochondria-to nuclear-encoded components of the electron transport chain resulting in control of mitochondrial ROS production. Participates in dendritic cell endocytosis and may associate with mitochondrial oxidative phosphorylation. This Mus musculus (Mouse) protein is Solute carrier family 25 member 33 (Slc25a33).